Consider the following 334-residue polypeptide: Ribosomal RNA small subunit methyltransferase H (334 aa).

S-adenosyl-L-methionine contacts are provided by residues 53–55, D72, F99, D122, and H129; that span reads GGH.

Belongs to the methyltransferase superfamily. RsmH family.

The protein resides in the cytoplasm. It catalyses the reaction cytidine(1402) in 16S rRNA + S-adenosyl-L-methionine = N(4)-methylcytidine(1402) in 16S rRNA + S-adenosyl-L-homocysteine + H(+). Its function is as follows. Specifically methylates the N4 position of cytidine in position 1402 (C1402) of 16S rRNA. In Leptospira interrogans serogroup Icterohaemorrhagiae serovar copenhageni (strain Fiocruz L1-130), this protein is Ribosomal RNA small subunit methyltransferase H.